Reading from the N-terminus, the 374-residue chain is Gustatory receptor 23a (374 aa).

The Cytoplasmic segment spans residues 1 to 6; that stretch reads MFPPTR. A helical transmembrane segment spans residues 7 to 27; sequence VQASSRVVLKIFHFILVAFSL. Residues 28 to 36 are Extracellular-facing; sequence RSRRLSRLV. A helical transmembrane segment spans residues 37–57; sequence LWLQFLGWLTWFISMWTQSVI. The Cytoplasmic segment spans residues 58–72; the sequence is YAQTIDCTLDCSLRH. A helical transmembrane segment spans residues 73–93; that stretch reads ILTFFQTVSHAFIVVTSFLDG. Over 94-112 the chain is Extracellular; it reads FRIKQDQLDEPIAFEDSDP. The chain crosses the membrane as a helical span at residues 113–133; sequence WLAFTVLAMLVPTLGVEYLVC. Residues 134–226 are Cytoplasmic-facing; the sequence is SNAPEYAFRI…YNDLHYLFVR (93 aa). A helical membrane pass occupies residues 227 to 247; the sequence is INGYFGGSLLTIIIVHFAIFV. Residues 248–263 are Extracellular-facing; that stretch reads SNSYWLFVDIRTRPWR. A helical membrane pass occupies residues 264–284; the sequence is IYAILLNLGFIFNVALQMAAA. At 285 to 343 the chain is on the cytoplasmic side; it reads CWHCQQSYNLGRQIGCLISKLVKPQGSKLYNDLVSEFSLQTLHQRFVVTAKDFFSLNLH. Residues 344-364 traverse the membrane as a helical segment; sequence LLSSMFAAVVTYLVILIQFMF. Topologically, residues 365–374 are extracellular; it reads AERSSTRGSG.

This sequence belongs to the insect chemoreceptor superfamily. Gustatory receptor (GR) family. Gr2a subfamily. In terms of tissue distribution, expressed in the adult labellar chemosensory neurons and labral sense organ. Expressed in neurons of the dorsal pharyngeal sense organ of larvae.

It localises to the cell membrane. Its function is as follows. Probable gustatory receptor which mediates acceptance or avoidance behavior, depending on its substrates. In Drosophila melanogaster (Fruit fly), this protein is Gustatory receptor 23a (Gr23a).